Consider the following 211-residue polypeptide: Probable nicotinate-nucleotide adenylyltransferase (211 aa).

It belongs to the NadD family.

The catalysed reaction is nicotinate beta-D-ribonucleotide + ATP + H(+) = deamido-NAD(+) + diphosphate. Its pathway is cofactor biosynthesis; NAD(+) biosynthesis; deamido-NAD(+) from nicotinate D-ribonucleotide: step 1/1. Functionally, catalyzes the reversible adenylation of nicotinate mononucleotide (NaMN) to nicotinic acid adenine dinucleotide (NaAD). In Desulfotalea psychrophila (strain LSv54 / DSM 12343), this protein is Probable nicotinate-nucleotide adenylyltransferase.